The chain runs to 302 residues: Nudix hydrolase 5 (302 aa).

The Nudix hydrolase domain maps to 122-254 (SHRIGIGAFV…EGNEMFKLIA (133 aa)). The short motif at 159–180 (GTIKEGESIWAGAVREVKEETD) is the Nudix box element. Mg(2+) is bound by residues Glu-174 and Glu-178.

This sequence belongs to the Nudix hydrolase family. The cofactor is Mg(2+). Mn(2+) is required as a cofactor. Expressed in roots, stems and leaves.

Probably mediates the hydrolysis of some nucleoside diphosphate derivatives. In Arabidopsis thaliana (Mouse-ear cress), this protein is Nudix hydrolase 5 (NUDT5).